The primary structure comprises 226 residues: Isoprenyl transferase (226 aa).

The active site involves D12. D12 is a Mg(2+) binding site. Residues 13-16 (GNAR), W17, K25, H29, and 57-59 (SSE) each bind substrate. Residue N60 is the Proton acceptor of the active site. Substrate is bound by residues W61, R63, R174, and 180-182 (RIS). Mg(2+) is bound at residue E193.

It belongs to the UPP synthase family. Homodimer. The cofactor is Mg(2+).

Catalyzes the condensation of isopentenyl diphosphate (IPP) with allylic pyrophosphates generating different type of terpenoids. This is Isoprenyl transferase from Rickettsia sibirica (strain ATCC VR-151 / 246).